The chain runs to 505 residues: Putative diacyglycerol O-acyltransferase MT0919 (505 aa).

The Proton acceptor role is filled by histidine 167.

The protein belongs to the long-chain O-acyltransferase family.

It catalyses the reaction an acyl-CoA + a 1,2-diacyl-sn-glycerol = a triacyl-sn-glycerol + CoA. The protein operates within glycerolipid metabolism; triacylglycerol biosynthesis. This Mycobacterium tuberculosis (strain CDC 1551 / Oshkosh) protein is Putative diacyglycerol O-acyltransferase MT0919.